A 316-amino-acid chain; its full sequence is 4-hydroxy-3-methylbut-2-enyl diphosphate reductase (316 aa).

Cysteine 12 lines the [4Fe-4S] cluster pocket. The (2E)-4-hydroxy-3-methylbut-2-enyl diphosphate site is built by histidine 41 and histidine 74. The dimethylallyl diphosphate site is built by histidine 41 and histidine 74. Histidine 41 and histidine 74 together coordinate isopentenyl diphosphate. Cysteine 96 contributes to the [4Fe-4S] cluster binding site. Residue histidine 124 participates in (2E)-4-hydroxy-3-methylbut-2-enyl diphosphate binding. Histidine 124 lines the dimethylallyl diphosphate pocket. Histidine 124 is a binding site for isopentenyl diphosphate. Glutamate 126 functions as the Proton donor in the catalytic mechanism. (2E)-4-hydroxy-3-methylbut-2-enyl diphosphate is bound at residue threonine 167. Cysteine 197 is a binding site for [4Fe-4S] cluster. Serine 225, serine 226, asparagine 227, and serine 269 together coordinate (2E)-4-hydroxy-3-methylbut-2-enyl diphosphate. Dimethylallyl diphosphate-binding residues include serine 225, serine 226, asparagine 227, and serine 269. The isopentenyl diphosphate site is built by serine 225, serine 226, asparagine 227, and serine 269.

Belongs to the IspH family. As to quaternary structure, homodimer. Requires [4Fe-4S] cluster as cofactor.

The catalysed reaction is isopentenyl diphosphate + 2 oxidized [2Fe-2S]-[ferredoxin] + H2O = (2E)-4-hydroxy-3-methylbut-2-enyl diphosphate + 2 reduced [2Fe-2S]-[ferredoxin] + 2 H(+). The enzyme catalyses dimethylallyl diphosphate + 2 oxidized [2Fe-2S]-[ferredoxin] + H2O = (2E)-4-hydroxy-3-methylbut-2-enyl diphosphate + 2 reduced [2Fe-2S]-[ferredoxin] + 2 H(+). It functions in the pathway isoprenoid biosynthesis; dimethylallyl diphosphate biosynthesis; dimethylallyl diphosphate from (2E)-4-hydroxy-3-methylbutenyl diphosphate: step 1/1. The protein operates within isoprenoid biosynthesis; isopentenyl diphosphate biosynthesis via DXP pathway; isopentenyl diphosphate from 1-deoxy-D-xylulose 5-phosphate: step 6/6. Its function is as follows. Catalyzes the conversion of 1-hydroxy-2-methyl-2-(E)-butenyl 4-diphosphate (HMBPP) into a mixture of isopentenyl diphosphate (IPP) and dimethylallyl diphosphate (DMAPP). Acts in the terminal step of the DOXP/MEP pathway for isoprenoid precursor biosynthesis. The protein is 4-hydroxy-3-methylbut-2-enyl diphosphate reductase of Salmonella agona (strain SL483).